Reading from the N-terminus, the 477-residue chain is Bifunctional protein HldE (477 aa).

Residues 1–318 form a ribokinase region; that stretch reads MQIQLPMFQN…RRAVQQEQGA (318 aa). Residue 195 to 198 coordinates ATP; the sequence is NLSE. The active site involves Asp-264. The cytidylyltransferase stretch occupies residues 344–477; that stretch reads FTNGCFDIIH…VEKIRKDQVK (134 aa).

It in the N-terminal section; belongs to the carbohydrate kinase PfkB family. The protein in the C-terminal section; belongs to the cytidylyltransferase family. In terms of assembly, homodimer.

It carries out the reaction D-glycero-beta-D-manno-heptose 7-phosphate + ATP = D-glycero-beta-D-manno-heptose 1,7-bisphosphate + ADP + H(+). The enzyme catalyses D-glycero-beta-D-manno-heptose 1-phosphate + ATP + H(+) = ADP-D-glycero-beta-D-manno-heptose + diphosphate. Its pathway is nucleotide-sugar biosynthesis; ADP-L-glycero-beta-D-manno-heptose biosynthesis; ADP-L-glycero-beta-D-manno-heptose from D-glycero-beta-D-manno-heptose 7-phosphate: step 1/4. It functions in the pathway nucleotide-sugar biosynthesis; ADP-L-glycero-beta-D-manno-heptose biosynthesis; ADP-L-glycero-beta-D-manno-heptose from D-glycero-beta-D-manno-heptose 7-phosphate: step 3/4. Catalyzes the phosphorylation of D-glycero-D-manno-heptose 7-phosphate at the C-1 position to selectively form D-glycero-beta-D-manno-heptose-1,7-bisphosphate. In terms of biological role, catalyzes the ADP transfer from ATP to D-glycero-beta-D-manno-heptose 1-phosphate, yielding ADP-D-glycero-beta-D-manno-heptose. The protein is Bifunctional protein HldE of Hahella chejuensis (strain KCTC 2396).